The sequence spans 265 residues: Cytochrome c oxidase subunit 3 (265 aa).

Helical transmembrane passes span proline 16–methionine 36, glycine 41–tryptophan 61, tyrosine 84–serine 104, isoleucine 115–leucine 135, threonine 137–glycine 157, alanine 162–methionine 182, phenylalanine 200–isoleucine 220, and tryptophan 245–isoleucine 265.

Belongs to the cytochrome c oxidase subunit 3 family. As to quaternary structure, component of the cytochrome c oxidase (complex IV, CIV), a multisubunit enzyme composed of a catalytic core of 3 subunits and several supernumerary subunits. The complex exists as a monomer or a dimer and forms supercomplexes (SCs) in the inner mitochondrial membrane with ubiquinol-cytochrome c oxidoreductase (cytochrome b-c1 complex, complex III, CIII).

It is found in the mitochondrion inner membrane. The catalysed reaction is 4 Fe(II)-[cytochrome c] + O2 + 8 H(+)(in) = 4 Fe(III)-[cytochrome c] + 2 H2O + 4 H(+)(out). Component of the cytochrome c oxidase, the last enzyme in the mitochondrial electron transport chain which drives oxidative phosphorylation. The respiratory chain contains 3 multisubunit complexes succinate dehydrogenase (complex II, CII), ubiquinol-cytochrome c oxidoreductase (cytochrome b-c1 complex, complex III, CIII) and cytochrome c oxidase (complex IV, CIV), that cooperate to transfer electrons derived from NADH and succinate to molecular oxygen, creating an electrochemical gradient over the inner membrane that drives transmembrane transport and the ATP synthase. Cytochrome c oxidase is the component of the respiratory chain that catalyzes the reduction of oxygen to water. Electrons originating from reduced cytochrome c in the intermembrane space (IMS) are transferred via the dinuclear copper A center (CU(A)) of subunit 2 and heme A of subunit 1 to the active site in subunit 1, a binuclear center (BNC) formed by heme A3 and copper B (CU(B)). The BNC reduces molecular oxygen to 2 water molecules using 4 electrons from cytochrome c in the IMS and 4 protons from the mitochondrial matrix. The polypeptide is Cytochrome c oxidase subunit 3 (COX3) (Glycine max (Soybean)).